A 317-amino-acid polypeptide reads, in one-letter code: Xylose/arabinose import permease protein XacH (317 aa).

The next 6 membrane-spanning stretches (helical) occupy residues 40–60 (GIPFVLMSIAVYGGTGYNFAI), 98–118 (LVLLVGFTTICLVLGLFLAIL), 132–152 (VYLLPMSLSFVVTAQLWLWMF), 179–199 (IALGAVILALIWQFSGYTMVV), 241–261 (AAVVLMVFALKAFTFLYALVG), and 290–310 (AAIATMLLIMALGVIGPYLYY). The region spanning 94 to 309 (AQNNLVLLVG…ALGVIGPYLY (216 aa)) is the ABC transmembrane type-1 domain.

The protein belongs to the binding-protein-dependent transport system permease family. As to quaternary structure, the complex is composed of two ATP-binding proteins (XacJ and XacK), two transmembrane proteins (XacH and XacI) and a solute-binding protein (XacG).

It localises to the cell membrane. Its function is as follows. Part of the ABC transporter complex XacGHIJK involved in the uptake of xylose and arabinose. Responsible for the translocation of the substrate across the membrane. This Haloferax volcanii (strain ATCC 29605 / DSM 3757 / JCM 8879 / NBRC 14742 / NCIMB 2012 / VKM B-1768 / DS2) (Halobacterium volcanii) protein is Xylose/arabinose import permease protein XacH.